Reading from the N-terminus, the 38-residue chain is Photosystem II reaction center protein L (38 aa).

Residues 17 to 37 (SLYWGLLLIFVLAVLFSSYIF) traverse the membrane as a helical segment.

This sequence belongs to the PsbL family. As to quaternary structure, PSII is composed of 1 copy each of membrane proteins PsbA, PsbB, PsbC, PsbD, PsbE, PsbF, PsbH, PsbI, PsbJ, PsbK, PsbL, PsbM, PsbT, PsbX, PsbY, PsbZ, Psb30/Ycf12, at least 3 peripheral proteins of the oxygen-evolving complex and a large number of cofactors. It forms dimeric complexes.

The protein localises to the plastid. Its subcellular location is the chloroplast thylakoid membrane. In terms of biological role, one of the components of the core complex of photosystem II (PSII). PSII is a light-driven water:plastoquinone oxidoreductase that uses light energy to abstract electrons from H(2)O, generating O(2) and a proton gradient subsequently used for ATP formation. It consists of a core antenna complex that captures photons, and an electron transfer chain that converts photonic excitation into a charge separation. This subunit is found at the monomer-monomer interface and is required for correct PSII assembly and/or dimerization. The polypeptide is Photosystem II reaction center protein L (Oltmannsiellopsis viridis (Marine flagellate)).